A 549-amino-acid chain; its full sequence is Oxygen-dependent choline dehydrogenase (549 aa).

An FAD-binding site is contributed by 4-33; it reads DFVIIGSGSAGSAMAYRLSEDGRYSVIVIE. H465 serves as the catalytic Proton acceptor.

It belongs to the GMC oxidoreductase family. Requires FAD as cofactor.

It catalyses the reaction choline + A = betaine aldehyde + AH2. The enzyme catalyses betaine aldehyde + NAD(+) + H2O = glycine betaine + NADH + 2 H(+). It functions in the pathway amine and polyamine biosynthesis; betaine biosynthesis via choline pathway; betaine aldehyde from choline (cytochrome c reductase route): step 1/1. Functionally, involved in the biosynthesis of the osmoprotectant glycine betaine. Catalyzes the oxidation of choline to betaine aldehyde and betaine aldehyde to glycine betaine at the same rate. This is Oxygen-dependent choline dehydrogenase from Brucella ovis (strain ATCC 25840 / 63/290 / NCTC 10512).